A 214-amino-acid chain; its full sequence is MSIFNKDALSSFFGLSGEEDDYYDNYEEYEERKAVNEPPRRAARPKPQRPVQQQESYSQPAYTQQSEPVVEKPSARYRSAEAHQERDTQQAAYTEKKVVSMRSSNQSATTNTRRAQESTANAKTHKITIIEPRVYSEAMSIAKHLFAEEAVLVNFTLVEEDQARRIVDFLTGTVYALDGDIQRVGNEIFLCTPANMEIDSATAQSLANKQFFDF.

Positions 24–120 (DNYEEYEERK…NTRRAQESTA (97 aa)) are disordered. A compositionally biased stretch (basic and acidic residues) spans 30–40 (EERKAVNEPPR). The span at 55-67 (ESYSQPAYTQQSE) shows a compositional bias: polar residues. Basic and acidic residues predominate over residues 69–98 (VVEKPSARYRSAEAHQERDTQQAAYTEKKV). Polar residues predominate over residues 101–120 (MRSSNQSATTNTRRAQESTA).

This sequence belongs to the SepF family. In terms of assembly, homodimer. Interacts with FtsZ.

The protein localises to the cytoplasm. In terms of biological role, cell division protein that is part of the divisome complex and is recruited early to the Z-ring. Probably stimulates Z-ring formation, perhaps through the cross-linking of FtsZ protofilaments. Its function overlaps with FtsA. In Enterococcus faecalis (strain ATCC 700802 / V583), this protein is Cell division protein SepF.